Reading from the N-terminus, the 72-residue chain is Small proline-rich protein 2A (72 aa).

Low complexity predominate over residues 1-11 (MSYQQQQCKQP). Residues 1 to 20 (MSYQQQQCKQPCQPPPVCPT) form a disordered region. 3 tandem repeats follow at residues 21 to 29 (PKCPEPCPP), 30 to 38 (PKCPEPCPP), and 39 to 47 (PKCPQPCPP). The tract at residues 21–47 (PKCPEPCPPPKCPEPCPPPKCPQPCPP) is 3 X 9 AA tandem repeats of P-K-C-P-[EQ]-P-C-P-P. The interval 42-72 (PQPCPPQQCQQKYPPVTPSPPCQSKYPPKSK) is disordered.

It belongs to the cornifin (SPRR) family. Forms five pairs of intrachain disulfide bonds. As to expression, expressed in intestine; selectively expressed in goblet cells.

It localises to the secreted. The protein resides in the extracellular space. The protein localises to the cytoplasmic vesicle. Its subcellular location is the secretory vesicle. Functionally, gut bactericidal protein that selectively kills Gram-positive bacteria by binding to negatively charged lipids on bacterial membranes, leading to bacterial membrane permeabilization and disruption. Specifically binds lipids bearing negatively charged headgroups, such as phosphatidic acid, phosphatidylserine (PS), cardiolipin (CL), and phosphatidylinositol phosphates, but not to zwitterionic or neutral lipids. Induced by type-2 cytokines in response to helminth infection and is required to protect against helminth-induced bacterial invasion of intestinal tissue. May also be involved in the development of the cornified envelope of squamous epithelia; however, additional evidences are required to confirm this result in vivo. This Homo sapiens (Human) protein is Small proline-rich protein 2A.